We begin with the raw amino-acid sequence, 295 residues long: RNA polymerase sigma factor RpoH (295 aa).

Positions 52 to 121 (MVTSHLRLVA…IQEYILRSWS (70 aa)) are sigma-70 factor domain-2. Positions 76–79 (EVIS) match the Interaction with polymerase core subunit RpoC motif. The tract at residues 230–281 (AMVELTDRERHILTERRLKDDPTTLEELAAQYGVSRERVRQIEVRAFEKLQK) is sigma-70 factor domain-4. A DNA-binding region (H-T-H motif) is located at residues 254–273 (LEELAAQYGVSRERVRQIEV).

Belongs to the sigma-70 factor family. RpoH subfamily. In terms of assembly, interacts with the RNA polymerase core enzyme.

Its subcellular location is the cytoplasm. Functionally, sigma factors are initiation factors that promote the attachment of RNA polymerase to specific initiation sites and are then released. This sigma factor is involved in regulation of expression of heat shock genes. The polypeptide is RNA polymerase sigma factor RpoH (Caulobacter vibrioides (strain ATCC 19089 / CIP 103742 / CB 15) (Caulobacter crescentus)).